A 134-amino-acid polypeptide reads, in one-letter code: Ribonuclease VapC11 (134 aa).

The 125-residue stretch at 2 to 126 (ILIDTSAWVE…ADFDVIARIT (125 aa)) folds into the PINc domain. Mg(2+) is bound by residues D5 and D98.

The protein belongs to the PINc/VapC protein family. Requires Mg(2+) as cofactor.

Functionally, toxic component of a type II toxin-antitoxin (TA) system. Acts as an RNase. Its toxic effects on cell growth and colony formation are neutralized by coexpression with cognate antitoxin VapB11. In Mycobacterium tuberculosis (strain CDC 1551 / Oshkosh), this protein is Ribonuclease VapC11.